A 358-amino-acid chain; its full sequence is UPF0283 membrane protein PM0909 (358 aa).

A run of 3 helical transmembrane segments spans residues 62–82 (LALTALLFCFAVIAQSIQWLV), 90–110 (WIYFVFSLVTCLVVLLGVSSL), and 213–233 (ALEAAVIVAVSPLAVIDMFFL).

This sequence belongs to the UPF0283 family.

The protein localises to the cell inner membrane. This chain is UPF0283 membrane protein PM0909, found in Pasteurella multocida (strain Pm70).